The chain runs to 316 residues: Protoheme IX farnesyltransferase 2 (316 aa).

The span at 1–15 (MEQNLNSEQKPQSSA) shows a compositional bias: polar residues. Residues 1–24 (MEQNLNSEQKPQSSAKPRGKSSRS) are disordered. The next 7 membrane-spanning stretches (helical) occupy residues 62-82 (IPEMIFSTVGSALVIGAAGAF), 117-137 (IVMLIIGLAVLALASPLAAAF), 163-183 (IGSISGAVPPLIGWSAVSTDI), 188-208 (IARFIFVMVIWQMPHFYAIAI), 231-251 (TYYQTNFYLILLILSSFLFGS), 252-272 (LSVGIMLVALLLSIAWLVMSI), and 293-313 (LFHMTILFTTVIVYSLVGVIF).

This sequence belongs to the UbiA prenyltransferase family. Protoheme IX farnesyltransferase subfamily. Interacts with CtaA.

Its subcellular location is the cell membrane. The enzyme catalyses heme b + (2E,6E)-farnesyl diphosphate + H2O = Fe(II)-heme o + diphosphate. The protein operates within porphyrin-containing compound metabolism; heme O biosynthesis; heme O from protoheme: step 1/1. In terms of biological role, converts heme B (protoheme IX) to heme O by substitution of the vinyl group on carbon 2 of heme B porphyrin ring with a hydroxyethyl farnesyl side group. The chain is Protoheme IX farnesyltransferase 2 from Lysinibacillus sphaericus (strain C3-41).